The primary structure comprises 52 residues: Rubredoxin (52 aa).

A Rubredoxin-like domain is found at 1–52 (MKKYVCTVCGYEYDPAEGDPDNGVKPGTSFDDLPADWVCPVCGAPKSEFEAA). Fe cation is bound by residues cysteine 6, cysteine 9, cysteine 39, and cysteine 42.

The protein belongs to the rubredoxin family. It depends on Fe(3+) as a cofactor.

The protein resides in the cytoplasm. Its function is as follows. Rubredoxin is a small nonheme, iron protein lacking acid-labile sulfide. Its single Fe, chelated to 4 Cys, functions as an electron acceptor and may also stabilize the conformation of the molecule. Electron acceptor for cytoplasmic lactate dehydrogenase. The protein is Rubredoxin (rub) of Nitratidesulfovibrio vulgaris (strain ATCC 29579 / DSM 644 / CCUG 34227 / NCIMB 8303 / VKM B-1760 / Hildenborough) (Desulfovibrio vulgaris).